A 179-amino-acid polypeptide reads, in one-letter code: ATP synthase subunit delta (179 aa).

This sequence belongs to the ATPase delta chain family. As to quaternary structure, F-type ATPases have 2 components, F(1) - the catalytic core - and F(0) - the membrane proton channel. F(1) has five subunits: alpha(3), beta(3), gamma(1), delta(1), epsilon(1). F(0) has three main subunits: a(1), b(2) and c(10-14). The alpha and beta chains form an alternating ring which encloses part of the gamma chain. F(1) is attached to F(0) by a central stalk formed by the gamma and epsilon chains, while a peripheral stalk is formed by the delta and b chains.

It localises to the cell inner membrane. Functionally, f(1)F(0) ATP synthase produces ATP from ADP in the presence of a proton or sodium gradient. F-type ATPases consist of two structural domains, F(1) containing the extramembraneous catalytic core and F(0) containing the membrane proton channel, linked together by a central stalk and a peripheral stalk. During catalysis, ATP synthesis in the catalytic domain of F(1) is coupled via a rotary mechanism of the central stalk subunits to proton translocation. Its function is as follows. This protein is part of the stalk that links CF(0) to CF(1). It either transmits conformational changes from CF(0) to CF(1) or is implicated in proton conduction. The polypeptide is ATP synthase subunit delta (Bordetella petrii (strain ATCC BAA-461 / DSM 12804 / CCUG 43448)).